The primary structure comprises 237 residues: Large ribosomal subunit protein uL22m (237 aa).

It belongs to the universal ribosomal protein uL22 family.

The protein localises to the mitochondrion. The chain is Large ribosomal subunit protein uL22m (mrpl22) from Dictyostelium discoideum (Social amoeba).